Consider the following 446-residue polypeptide: Sterile alpha motif domain-containing protein 7 (446 aa).

The interval 94 to 168 (HTARTEMEMY…NLQGNPMLAA (75 aa)) is required for localization to nuclear polycomb bodies. Disordered regions lie at residues 187 to 207 (NTGN…QAEE) and 225 to 277 (KDPD…AWDD). Positions 232 to 249 (PSNQKSSETNEKPTTALA) are enriched in polar residues. An SAM domain is found at 327 to 392 (WTVDDVHSFI…SQVSQHVGSM (66 aa)).

Monomer, homodimer and homooligomer. Component of a Polycomb group (PcG) multiprotein PRC1-like complex. Interacts with PHC2, NR2E3 and SAMD11. Interacts with RNF1 in a PHC2-dependent manner. Expressed in the retina (at protein level). Expressed in the retinal inner and outer nuclear layers.

Its subcellular location is the nucleus. It localises to the cytoplasm. Functionally, component of a Polycomb group (PcG) multiprotein PRC1-like complex, essential for establishing rod photoreceptor cell identity and function by silencing nonrod gene expression in developing rod photoreceptor cells. Via its association with the PRC1-like complex, promotes epigenetic repressive marks H3K27me3 and H2AK119ub marks in nonrod genes, silencing their transcription. Represses Crx-controlled photoreceptor-specific gene expression. This chain is Sterile alpha motif domain-containing protein 7 (SAMD7), found in Homo sapiens (Human).